We begin with the raw amino-acid sequence, 291 residues long: Pyridoxal 5'-phosphate synthase subunit PdxS (291 aa).

D23 is a binding site for D-ribose 5-phosphate. K80 (schiff-base intermediate with D-ribose 5-phosphate) is an active-site residue. D-ribose 5-phosphate is bound at residue G152. R164 lines the D-glyceraldehyde 3-phosphate pocket. Residues G213 and 234–235 (GS) each bind D-ribose 5-phosphate.

Belongs to the PdxS/SNZ family. In the presence of PdxT, forms a dodecamer of heterodimers.

The enzyme catalyses aldehydo-D-ribose 5-phosphate + D-glyceraldehyde 3-phosphate + L-glutamine = pyridoxal 5'-phosphate + L-glutamate + phosphate + 3 H2O + H(+). It participates in cofactor biosynthesis; pyridoxal 5'-phosphate biosynthesis. In terms of biological role, catalyzes the formation of pyridoxal 5'-phosphate from ribose 5-phosphate (RBP), glyceraldehyde 3-phosphate (G3P) and ammonia. The ammonia is provided by the PdxT subunit. Can also use ribulose 5-phosphate and dihydroxyacetone phosphate as substrates, resulting from enzyme-catalyzed isomerization of RBP and G3P, respectively. This is Pyridoxal 5'-phosphate synthase subunit PdxS from Clostridium acetobutylicum (strain ATCC 824 / DSM 792 / JCM 1419 / IAM 19013 / LMG 5710 / NBRC 13948 / NRRL B-527 / VKM B-1787 / 2291 / W).